We begin with the raw amino-acid sequence, 266 residues long: Cell division cycle-associated protein 3 (266 aa).

Positions M1 to P84 are disordered. S29 and S31 each carry phosphoserine. Residues A32–Q46 show a composition bias toward polar residues. T37 is modified (phosphothreonine). Phosphoserine occurs at positions 44 and 67. T75 carries the phosphothreonine modification. The segment at K90 to Y119 is F-box-like. A Phosphoserine modification is found at S93. 2 disordered regions span residues D120 to N225 and K242 to S266. The span at L143–Q156 shows a compositional bias: basic and acidic residues. A compositionally biased stretch (polar residues) spans S157–D168. Residue S197 is modified to Phosphoserine. Position 200 is a phosphothreonine (T200). Residues Q203–L213 are compositionally biased toward polar residues. S207 is subject to Phosphoserine. At T210 the chain carries Phosphothreonine. The span at P250–Q259 shows a compositional bias: basic and acidic residues. The KEN box motif lies at K256–N258.

As to quaternary structure, interacts with SKP1. Part of a SCF (SKP1-cullin-F-box) protein ligase complex. Post-translationally, ubiquitinated and degraded by the APC/C-Cdh1 complex.

It localises to the cytoplasm. The protein localises to the cytosol. Its pathway is protein modification; protein ubiquitination. In terms of biological role, F-box-like protein which is required for entry into mitosis. Acts by participating in E3 ligase complexes that mediate the ubiquitination and degradation of WEE1 kinase at G2/M phase. This chain is Cell division cycle-associated protein 3 (Cdca3), found in Mus musculus (Mouse).